Here is a 401-residue protein sequence, read N- to C-terminus: Inactive (1R,4R,5S)-(-)-guaia-6,10(14)-diene synthase (401 aa).

The disordered stretch occupies residues 1–20; it reads MVKFDSGSESEMTNGDELHI. Mg(2+) contacts are provided by D134 and E139. The DDXXD motif motif lies at 134–138; the sequence is DDQFD. A substrate-binding site is contributed by R242. S292 contacts Mg(2+). Residue K295 coordinates substrate. D296 serves as a coordination point for Mg(2+). 375–376 serves as a coordination point for substrate; it reads RY.

It belongs to the terpene synthase family. The cofactor is Mg(2+).

In Gibberella fujikuroi (strain CBS 195.34 / IMI 58289 / NRRL A-6831) (Bakanae and foot rot disease fungus), this protein is Inactive (1R,4R,5S)-(-)-guaia-6,10(14)-diene synthase.